A 286-amino-acid chain; its full sequence is Polyamine aminopropyltransferase (286 aa).

The PABS domain occupies 3 to 240 (DLWYSESHAD…GHWLFGFASK (238 aa)). Gln32 lines the S-methyl-5'-thioadenosine pocket. Spermidine contacts are provided by His63 and Asp87. Residues Glu107 and 139–140 (DG) each bind S-methyl-5'-thioadenosine. Asp158 (proton acceptor) is an active-site residue. 158 to 161 (DSTD) contacts spermidine. Pro165 provides a ligand contact to S-methyl-5'-thioadenosine.

This sequence belongs to the spermidine/spermine synthase family. As to quaternary structure, homodimer or homotetramer.

The protein localises to the cytoplasm. The enzyme catalyses S-adenosyl 3-(methylsulfanyl)propylamine + putrescine = S-methyl-5'-thioadenosine + spermidine + H(+). The protein operates within amine and polyamine biosynthesis; spermidine biosynthesis; spermidine from putrescine: step 1/1. Its function is as follows. Catalyzes the irreversible transfer of a propylamine group from the amino donor S-adenosylmethioninamine (decarboxy-AdoMet) to putrescine (1,4-diaminobutane) to yield spermidine. This Clostridium acetobutylicum (strain ATCC 824 / DSM 792 / JCM 1419 / IAM 19013 / LMG 5710 / NBRC 13948 / NRRL B-527 / VKM B-1787 / 2291 / W) protein is Polyamine aminopropyltransferase.